A 166-amino-acid polypeptide reads, in one-letter code: Large ribosomal subunit protein uL10 (166 aa).

This sequence belongs to the universal ribosomal protein uL10 family. In terms of assembly, part of the ribosomal stalk of the 50S ribosomal subunit. The N-terminus interacts with L11 and the large rRNA to form the base of the stalk. The C-terminus forms an elongated spine to which L12 dimers bind in a sequential fashion forming a multimeric L10(L12)X complex.

Functionally, forms part of the ribosomal stalk, playing a central role in the interaction of the ribosome with GTP-bound translation factors. The polypeptide is Large ribosomal subunit protein uL10 (Azotobacter vinelandii (strain DJ / ATCC BAA-1303)).